The primary structure comprises 201 residues: Small ribosomal subunit protein uS2 (201 aa).

It belongs to the universal ribosomal protein uS2 family.

The chain is Small ribosomal subunit protein uS2 from Nanoarchaeum equitans (strain Kin4-M).